A 337-amino-acid polypeptide reads, in one-letter code: Phytanoyl-CoA dioxygenase, peroxisomal (337 aa).

The N-terminal 30 residues, 1-30, are a transit peptide targeting the peroxisome; the sequence is MDRNRASARLTVLLRHLGCRSAGTIIAHHT. Lys59 and Lys108 each carry N6-succinyllysine. Residues Lys120, Met157, 175 to 177, and Trp193 each bind 2-oxoglutarate; that span reads HQD. Residues His175 and Asp177 each contribute to the Fe cation site. Lys252 bears the N6-succinyllysine mark. Residue His264 participates in Fe cation binding. 2-oxoglutarate contacts are provided by Ser266 and Arg275.

This sequence belongs to the PhyH family. Interacts with FKBP52 and PHYHIP. Fe cation serves as cofactor. The cofactor is L-ascorbate. It depends on ATP as a cofactor. Mg(2+) is required as a cofactor.

Its subcellular location is the peroxisome. It carries out the reaction phytanoyl-CoA + 2-oxoglutarate + O2 = 2-hydroxyphytanoyl-CoA + succinate + CO2. It catalyses the reaction 3-methylhexadecanoyl-CoA + 2-oxoglutarate + O2 = 2-hydroxy-3-methylhexadecanoyl-CoA + succinate + CO2. The catalysed reaction is hexadecanoyl-CoA + 2-oxoglutarate + O2 = 2-hydroxyhexadecanoyl-CoA + succinate + CO2. The enzyme catalyses octanoyl-CoA + 2-oxoglutarate + O2 = 2-hydroxyoctanoyl-CoA + succinate + CO2. It carries out the reaction decanoyl-CoA + 2-oxoglutarate + O2 = 2-hydroxydecanoyl-CoA + succinate + CO2. It catalyses the reaction 3-methylbutanoyl-CoA + 2-oxoglutarate + O2 = 2-hydroxy-3-methylbutanoyl-CoA + succinate + CO2. The catalysed reaction is heptadecanoyl-CoA + 2-oxoglutarate + O2 = 2-hydroxyheptadecanoyl-CoA + succinate + CO2. The enzyme catalyses eicosanoyl-CoA + 2-oxoglutarate + O2 = 2-hydroxyeicosanoyl-CoA + succinate + CO2. It carries out the reaction octadecanoyl-CoA + 2-oxoglutarate + O2 = 2-hydroxyoctadecanoyl-CoA + succinate + CO2. It catalyses the reaction dodecanoyl-CoA + 2-oxoglutarate + O2 = 2-hydroxydodecanoyl-CoA + succinate + CO2. The catalysed reaction is tetradecanoyl-CoA + 2-oxoglutarate + O2 = 2-hydroxytetradecanoyl-CoA + succinate + CO2. The enzyme catalyses hexanoyl-CoA + 2-oxoglutarate + O2 = 2-hydroxyhexanoyl-CoA + succinate + CO2. It carries out the reaction butanoyl-CoA + 2-oxoglutarate + O2 = 2-hydroxybutanoyl-CoA + succinate + CO2. It catalyses the reaction 3-methylnonanoyl-CoA + 2-oxoglutarate + O2 = 2-hydroxy-3-methylnonanoyl-CoA + succinate + CO2. The catalysed reaction is 3-methylundecanoyl-CoA + 2-oxoglutarate + O2 = 2-hydroxy-3-methylundecanoyl-CoA + succinate + CO2. The enzyme catalyses 3-methyldodecanoyl-CoA + 2-oxoglutarate + O2 = 2-hydroxy-3-methyldodecanoyl-CoA + succinate + CO2. The protein operates within lipid metabolism; fatty acid metabolism. Its function is as follows. Catalyzes the 2-hydroxylation of not only racemic phytanoyl-CoA and the isomers of 3-methylhexadecanoyl-CoA, but also a variety of other mono- branched 3-methylacyl-CoA esters (with a chain length of at least seven carbon atoms) and straight-chain acyl-CoA esters (with a chain length longer than four carbon atoms). Does not hydroxylate long and very long straight chain acyl-CoAs or 2-methyl-and 4-methyl-branched acyl-CoAs. The chain is Phytanoyl-CoA dioxygenase, peroxisomal (PHYH) from Bos taurus (Bovine).